The sequence spans 218 residues: Large ribosomal subunit protein uL4 (218 aa).

The interval 54 to 106 is disordered; it reads GTHAVKNRGAVSGGGRKPWKQKGTGRARQGSIRAPQWYHGGVAHGPVPRDYSQ.

Belongs to the universal ribosomal protein uL4 family. As to quaternary structure, part of the 50S ribosomal subunit.

In terms of biological role, one of the primary rRNA binding proteins, this protein initially binds near the 5'-end of the 23S rRNA. It is important during the early stages of 50S assembly. It makes multiple contacts with different domains of the 23S rRNA in the assembled 50S subunit and ribosome. Functionally, forms part of the polypeptide exit tunnel. This chain is Large ribosomal subunit protein uL4, found in Bifidobacterium animalis subsp. lactis (strain AD011).